The following is a 535-amino-acid chain: Ankyrin repeat domain-containing protein 34C (535 aa).

ANK repeat units lie at residues 10-39 (TDGNSLLKAVWLGRLRLTRLLLEGGAYINE), 43-80 (KGETALMVACITKHVDQQSISKSKMVKYLLDNRADPNI), 84-114 (SGKTALIHACIRRAGGEVVSLLLENGADPSL), and 118-147 (TGASALVYAINADDKDALKHLLDACKAKGK). 2 disordered regions span residues 159–181 (SGTKTTKQYLNVPPSPKVEDRHS) and 214–237 (AGHPSSCNTSKAVNEPGSPTRKVS). The segment covering 216–225 (HPSSCNTSKA) has biased composition (polar residues). S301 is subject to Phosphoserine. The interval 381-444 (DLDIQPGPDP…RRRPPHLLER (64 aa)) is disordered. S447 bears the Phosphoserine mark.

Belongs to the ANKRD34 family.

The sequence is that of Ankyrin repeat domain-containing protein 34C (ANKRD34C) from Homo sapiens (Human).